A 259-amino-acid chain; its full sequence is Chaplin-C (259 aa).

A signal peptide spans 1 to 28; it reads MRQATRKGLMTMAAATGVIAAAGGAAHA. The Chaplin 1 domain maps to 39-79; it reads SPGVLSGNTVQAPVHVPVNVCGNTVDVVGVLNPAMGNACAN. Residues 84–112 are compositionally biased toward gly residues; it reads ASGGHGGHGGHGGYGDSGGEGGSHGGSHA. Disordered regions lie at residues 84 to 129 and 154 to 227; these read ASGG…NHVE and GNDC…ALAE. Residues 119–159 enclose the Chaplin 2 domain; sequence SPGVGSGNHVEVPIDVPVNVCGNSIDVVGALNPTTGNDCGN. Residues 180 to 189 are compositionally biased toward low complexity; that stretch reads HNPGNPGNPD. Residues 225-229 carry the LPXTG sorting signal motif; that stretch reads LAETG. A Pentaglycyl murein peptidoglycan amidated threonine modification is found at T228. The propeptide at 229-259 is removed by sortase; the sequence is GSDLPLGLALPVGAGALLAGTVLYRKARASV.

The protein belongs to the chaplin family. Long chaplin subfamily.

The protein localises to the secreted. It localises to the cell wall. Its function is as follows. One of 8 partially redundant surface-active proteins required for efficient formation of aerial mycelium; the short chaplins assemble into a hydrophobic, amyloidal fibrillar surface layer that envelopes and protects aerial hyphae and spores, presumably anchored to the long chaplins. Chaplins have an overlapping function with the surface-active SapB peptide; chaplins are essential on minimal medium while on rich medium both chaplins and SapB are required for efficient aerial hyphae formation. A minimal chaplin strain capable of forming aerial mycelium/hyphae on minimal medium contains ChpC, ChpE and ChpH. The strain also has restored rodlet formation on the hyphae surface. The long chaplins (ChpA, ChpB, ChpC) are not absolutely necessary for short chaplin localization or rodlet formation, but probably play a role in initiating aerial hyphae development. Chaplins are also involved in cell attachment to a hydrophobic surface. This Streptomyces coelicolor (strain ATCC BAA-471 / A3(2) / M145) protein is Chaplin-C.